A 499-amino-acid chain; its full sequence is Calcium/calmodulin-dependent protein kinase type II subunit delta (499 aa).

Residue A2 is modified to N-acetylalanine. The Protein kinase domain occupies Y14 to I272. Residues L20–V28 and K43 contribute to the ATP site. Catalysis depends on D136, which acts as the Proton acceptor. Residues H283–K292 form an autoinhibitory domain region. T287 bears the Phosphothreonine; by autocatalysis mark. The tract at residues L291–K301 is calmodulin-binding. A phosphothreonine; by autocatalysis mark is found at T306 and T307. Position 315 is a phosphoserine (S315). An N6-acetyllysine modification is found at K318. Phosphoserine occurs at positions 319 and 330. T331 carries the phosphothreonine modification. Phosphoserine is present on S333. 2 positions are modified to phosphothreonine: T336 and T337. A phosphoserine mark is found at S404, S490, and S494.

It belongs to the protein kinase superfamily. CAMK Ser/Thr protein kinase family. CaMK subfamily. CAMK2 is composed of 4 different chains: alpha (CAMK2A), beta (CAMK2B), gamma (CAMK2G), and delta (CAMK2D). The different isoforms assemble into homo- or heteromultimeric holoenzymes composed of 12 subunits with two hexameric rings stacked one on top of the other. Interacts with RRAD and CACNB2. In terms of processing, autophosphorylation of Thr-287 following activation by Ca(2+)/calmodulin. Phosphorylation of Thr-287 locks the kinase into an activated state. As to expression, expressed in cardiac muscle and skeletal muscle. Isoform Delta 3, isoform Delta 2, isoform Delta 8 and isoform Delta 9 are expressed in cardiac muscle. Isoform Delta 11 is expressed in skeletal muscle.

It is found in the cell membrane. Its subcellular location is the sarcolemma. The protein localises to the sarcoplasmic reticulum membrane. It carries out the reaction L-seryl-[protein] + ATP = O-phospho-L-seryl-[protein] + ADP + H(+). The catalysed reaction is L-threonyl-[protein] + ATP = O-phospho-L-threonyl-[protein] + ADP + H(+). Activated by Ca(2+)/calmodulin. Binding of calmodulin results in conformational change that relieves intrasteric autoinhibition and allows autophosphorylation of Thr-287 which turns the kinase in a constitutively active form and confers to the kinase a Ca(2+)-independent activity. In terms of biological role, calcium/calmodulin-dependent protein kinase involved in the regulation of Ca(2+) homeostatis and excitation-contraction coupling (ECC) in heart by targeting ion channels, transporters and accessory proteins involved in Ca(2+) influx into the myocyte, Ca(2+) release from the sarcoplasmic reticulum (SR), SR Ca(2+) uptake and Na(+) and K(+) channel transport. Targets also transcription factors and signaling molecules to regulate heart function. In its activated form, is involved in the pathogenesis of dilated cardiomyopathy and heart failure. Contributes to cardiac decompensation and heart failure by regulating SR Ca(2+) release via direct phosphorylation of RYR2 Ca(2+) channel on 'Ser-2808'. In the nucleus, phosphorylates the MEF2 repressor HDAC4, promoting its nuclear export and binding to 14-3-3 protein, and expression of MEF2 and genes involved in the hypertrophic program. Is essential for left ventricular remodeling responses to myocardial infarction. In pathological myocardial remodeling acts downstream of the beta adrenergic receptor signaling cascade to regulate key proteins involved in ECC. Regulates Ca(2+) influx to myocytes by binding and phosphorylating the L-type Ca(2+) channel subunit beta-2 CACNB2. In addition to Ca(2+) channels, can target and regulate the cardiac sarcolemmal Na(+) channel Nav1.5/SCN5A and the K+ channel Kv4.3/KCND3, which contribute to arrhythmogenesis in heart failure. Phosphorylates phospholamban (PLN/PLB), an endogenous inhibitor of SERCA2A/ATP2A2, contributing to the enhancement of SR Ca(2+) uptake that may be important in frequency-dependent acceleration of relaxation (FDAR) and maintenance of contractile function during acidosis. May participate in the modulation of skeletal muscle function in response to exercise, by regulating SR Ca(2+) transport through phosphorylation of PLN/PLB and triadin, a ryanodine receptor-coupling factor. In response to interferon-gamma (IFN-gamma) stimulation, catalyzes phosphorylation of STAT1, stimulating the JAK-STAT signaling pathway. The polypeptide is Calcium/calmodulin-dependent protein kinase type II subunit delta (CAMK2D) (Homo sapiens (Human)).